Consider the following 550-residue polypeptide: Thermosome subunit (550 aa).

Positions 529 to 550 (KEKEGEKGGGGSEDFSSSSDLD) are disordered. The span at 541 to 550 (EDFSSSSDLD) shows a compositional bias: low complexity.

It belongs to the TCP-1 chaperonin family. In terms of assembly, forms an oligomeric complex of eight-membered rings.

Molecular chaperone; binds unfolded polypeptides in vitro, and has a weak ATPase activity. This chain is Thermosome subunit (ths), found in Pyrococcus abyssi (strain GE5 / Orsay).